A 303-amino-acid polypeptide reads, in one-letter code: Probable cell division protein WhiA (303 aa).

The H-T-H motif DNA-binding region spans 272 to 303 (SIQQVADALEFPITKSGVNHRLRKINKIADDL).

This sequence belongs to the WhiA family.

Its function is as follows. Involved in cell division and chromosome segregation. This Streptococcus pyogenes serotype M1 protein is Probable cell division protein WhiA.